The primary structure comprises 179 residues: Large ribosomal subunit protein uL5 (179 aa).

The protein belongs to the universal ribosomal protein uL5 family. In terms of assembly, part of the 50S ribosomal subunit; part of the 5S rRNA/L5/L18/L25 subcomplex. Contacts the 5S rRNA and the P site tRNA. Forms a bridge to the 30S subunit in the 70S ribosome.

This is one of the proteins that bind and probably mediate the attachment of the 5S RNA into the large ribosomal subunit, where it forms part of the central protuberance. In the 70S ribosome it contacts protein S13 of the 30S subunit (bridge B1b), connecting the 2 subunits; this bridge is implicated in subunit movement. Contacts the P site tRNA; the 5S rRNA and some of its associated proteins might help stabilize positioning of ribosome-bound tRNAs. This Salmonella arizonae (strain ATCC BAA-731 / CDC346-86 / RSK2980) protein is Large ribosomal subunit protein uL5.